Reading from the N-terminus, the 198-residue chain is Small ribosomal subunit protein uS7 (198 aa).

This sequence belongs to the universal ribosomal protein uS7 family. Part of the 30S ribosomal subunit.

Its function is as follows. One of the primary rRNA binding proteins, it binds directly to 16S rRNA where it nucleates assembly of the head domain of the 30S subunit. Is located at the subunit interface close to the decoding center. This chain is Small ribosomal subunit protein uS7, found in Desulfurococcus amylolyticus (strain DSM 18924 / JCM 16383 / VKM B-2413 / 1221n) (Desulfurococcus kamchatkensis).